Consider the following 63-residue polypeptide: Conotoxin Pn-B01411 (63 aa).

The N-terminal stretch at 1–22 (MRCFPVFIILLLLMASAPSFDA) is a signal peptide. A propeptide spanning residues 23–49 (RPKTEDDVPLSSFRDNLKRTLRTLLDP) is cleaved from the precursor. Ile-62 is subject to Isoleucine amide.

Belongs to the conotoxin T superfamily. Post-translationally, contains 2 disulfide bonds that can be either 'C1-C3, C2-C4' or 'C1-C4, C2-C3', since these disulfide connectivities have been observed for conotoxins with cysteine framework V (for examples, see AC P0DQQ7 and AC P81755). As to expression, expressed by the venom duct.

Its subcellular location is the secreted. This Conus pennaceus (Feathered cone) protein is Conotoxin Pn-B01411.